The primary structure comprises 680 residues: Lipase 1 (680 aa).

An N-terminal signal peptide occupies residues 1 to 34; sequence MKSQNKYSIRKFSVGASSILIATLLFLSGGQAQA. A propeptide spanning residues 35–290 is cleaved from the precursor; the sequence is AEKQVNMGNS…AKAKDDQTNK (256 aa). A disordered region spans residues 82–259; the sequence is KNLHNDKTIS…PTKDNDKKNG (178 aa). Positions 84-111 are enriched in basic and acidic residues; that stretch reads LHNDKTISEENHRKTDDLNKDQLKDDKN. Composition is skewed to polar residues over residues 125–138, 162–193, and 204–223; these read KNNNANPSDVNQGL, SQDSNANNNLPSQSLTKEAPSLNKSDQTSQRE, and QPQQNNQANDKITNHNFNNE. Residues 224 to 234 show a composition bias toward basic and acidic residues; the sequence is QEVKPQKDEKT. The span at 235–246 shows a compositional bias: polar residues; that stretch reads LSVSDLKNNQKS. The active-site Nucleophile is serine 408. The Charge relay system role is filled by aspartate 600. Aspartate 638 is a Ca(2+) binding site. Histidine 639 functions as the Charge relay system in the catalytic mechanism. Ca(2+) is bound by residues aspartate 641, aspartate 646, and aspartate 649.

This sequence belongs to the AB hydrolase superfamily. Lipase family.

The protein localises to the secreted. It carries out the reaction a triacylglycerol + H2O = a diacylglycerol + a fatty acid + H(+). This Staphylococcus aureus (strain Mu50 / ATCC 700699) protein is Lipase 1 (lip1).